Reading from the N-terminus, the 173-residue chain is Large ribosomal subunit protein uL10 (173 aa).

This sequence belongs to the universal ribosomal protein uL10 family. As to quaternary structure, part of the ribosomal stalk of the 50S ribosomal subunit. The N-terminus interacts with L11 and the large rRNA to form the base of the stalk. The C-terminus forms an elongated spine to which L12 dimers bind in a sequential fashion forming a multimeric L10(L12)X complex.

In terms of biological role, forms part of the ribosomal stalk, playing a central role in the interaction of the ribosome with GTP-bound translation factors. The chain is Large ribosomal subunit protein uL10 from Desulfatibacillum aliphaticivorans.